A 312-amino-acid polypeptide reads, in one-letter code: Ornithine carbamoyltransferase (312 aa).

Residues 57–60 (STRT), Q84, R108, and 135–138 (HPCQ) contribute to the carbamoyl phosphate site. Residues N166, D226, and 230–231 (SM) contribute to the L-ornithine site. Residues 265 to 266 (CL) and R293 each bind carbamoyl phosphate.

The protein belongs to the aspartate/ornithine carbamoyltransferase superfamily. OTCase family.

The protein resides in the cytoplasm. It carries out the reaction carbamoyl phosphate + L-ornithine = L-citrulline + phosphate + H(+). Its pathway is amino-acid degradation; L-arginine degradation via ADI pathway; carbamoyl phosphate from L-arginine: step 2/2. Its function is as follows. Reversibly catalyzes the transfer of the carbamoyl group from carbamoyl phosphate (CP) to the N(epsilon) atom of ornithine (ORN) to produce L-citrulline. This Brucella abortus (strain 2308) protein is Ornithine carbamoyltransferase.